The following is a 589-amino-acid chain: Threonine--tRNA ligase (589 aa).

Residues 191 to 487 (DHRKIGKNLG…LLEQTKGNFP (297 aa)) form a catalytic region. Zn(2+)-binding residues include C284, H335, and H464.

It belongs to the class-II aminoacyl-tRNA synthetase family. Homodimer. Requires Zn(2+) as cofactor.

It is found in the cytoplasm. The enzyme catalyses tRNA(Thr) + L-threonine + ATP = L-threonyl-tRNA(Thr) + AMP + diphosphate + H(+). Its function is as follows. Catalyzes the attachment of threonine to tRNA(Thr) in a two-step reaction: L-threonine is first activated by ATP to form Thr-AMP and then transferred to the acceptor end of tRNA(Thr). Also edits incorrectly charged L-seryl-tRNA(Thr). The protein is Threonine--tRNA ligase of Mycoplasmopsis pulmonis (strain UAB CTIP) (Mycoplasma pulmonis).